Reading from the N-terminus, the 204-residue chain is MDRVVLLLSVLSLGVSSQPITDSQHLFSIAVSRIQNLHLLAQRLFSNFESTLQTEDQRQLNKIFLQDFCNSDYIISPIDKHETQRSSVLKLLSISYRLVESWEFSSRFLSGGSALRNQISPRLSELKTGIQLLITANQDGAEMFSDVSALQLAPYGNFYQSLGGEELLRRNYELLACFKKDMHKVETYLTVAKCRLSPEANCTL.

The first 17 residues, 1 to 17 (MDRVVLLLSVLSLGVSS), serve as a signal peptide directing secretion. Position 18 is a pyrrolidone carboxylic acid (Gln18). Cystine bridges form between Cys69-Cys177 and Cys194-Cys202.

The protein belongs to the somatotropin/prolactin family.

It is found in the secreted. In terms of biological role, growth hormone plays an important role in growth control and is involved in the regulation of several anabolic processes. Implicated as an osmoregulatory substance important for seawater adaptation. In Seriola quinqueradiata (Five-ray yellowtail), this protein is Somatotropin (gh).